Here is a 574-residue protein sequence, read N- to C-terminus: NEDD4-binding protein 2-like 2 (574 aa).

Disordered stretches follow at residues 82–110, 127–161, 182–204, and 542–574; these read HKEMPGDKVGGTESIGSQALQDGKPLAPA, YKPPEKKKCRERKNETATFNNTDSKRRQEEKQKFN, ENENEASQGSCKEPEPSQEQTLS, and TQKSTQTPLPLQGDQRWGGSLGSHSQVSITDDY. Basic and acidic residues-rich tracts occupy residues 129 to 141 and 149 to 161; these read PPEKKKCRERKNE and DSKRRQEEKQKFN. The stretch at 162 to 196 forms a coiled coil; the sequence is SKKLEIDTELSQFYKEIEELENENEASQGSCKEPE. A compositionally biased stretch (polar residues) spans 563–574; it reads GSHSQVSITDDY.

This Rattus norvegicus (Rat) protein is NEDD4-binding protein 2-like 2 (N4bp2l2).